A 1501-amino-acid polypeptide reads, in one-letter code: Inactive protein tyrosine kinase pTKL (1501 aa).

Asparagine 64, asparagine 128, and asparagine 133 each carry an N-linked (GlcNAc...) asparagine glycan. Residues 204-221 show a composition bias toward basic residues; that stretch reads KKNKKNKKNKKKKNKKTK. The tract at residues 204 to 223 is disordered; the sequence is KKNKKNKKNKKKKNKKTKNT. N-linked (GlcNAc...) asparagine glycans are attached at residues asparagine 239, asparagine 242, asparagine 258, and asparagine 327. Positions 257-273 are enriched in basic and acidic residues; it reads MNISLHEKNDKKNEKKN. The disordered stretch occupies residues 257–276; sequence MNISLHEKNDKKNEKKNEKK. Residues 301–366 form the SAM domain; it reads WSLREVIQWL…LQLIKNLQVM (66 aa). Residues 392-425 form a disordered region; it reads NKNIKKGKNIKKEKKKKKEKNIKKEKKKKKKETK. The segment covering 394-424 has biased composition (basic residues); sequence NIKKGKNIKKEKKKKKEKNIKKEKKKKKKET. Residues 399-433 adopt a coiled-coil conformation; sequence KNIKKEKKKKKEKNIKKEKKKKKKETKKFNNMDKK. N-linked (GlcNAc...) asparagine glycans are attached at residues asparagine 448, asparagine 463, and asparagine 471. Residues 483 to 486 carry the RVxF motif 1 motif; sequence KVSF. Asparagine 506 carries an N-linked (GlcNAc...) asparagine glycan. Low complexity predominate over residues 543-597; the sequence is QLSSPLSSPLSSPSPSSSPSSSPSSSPSSSPSSSPSPSSSPSPSSSPSSSPSSSP. The disordered stretch occupies residues 543-607; sequence QLSSPLSSPL…SSPPSPLSYK (65 aa). An N-linked (GlcNAc...) asparagine glycan is attached at asparagine 652. A disordered region spans residues 659 to 678; sequence IKKSKSKYNNDKKEQKKLPL. A compositionally biased stretch (basic and acidic residues) spans 666–675; that stretch reads YNNDKKEQKK. Residues asparagine 681, asparagine 712, asparagine 737, asparagine 811, and asparagine 819 are each glycosylated (N-linked (GlcNAc...) asparagine). Residues 836 to 844 and lysine 864 each bind ATP; that span reads QNINNFGKY. Residues asparagine 1024, asparagine 1031, asparagine 1074, and asparagine 1157 are each glycosylated (N-linked (GlcNAc...) asparagine). One can recognise a Protein kinase domain in the interval 1088-1483; that stretch reads FHYQHNVLCG…HILKTISTLY (396 aa). The RVxF motif 2 motif lies at 1238–1241; the sequence is KVLF. Asparagine 1382 is a glycosylation site (N-linked (GlcNAc...) asparagine).

This sequence belongs to the protein kinase superfamily. TKL Ser/Thr protein kinase family. As to quaternary structure, interacts (via RVxF motif 1 and/or 2) with phosphatase PP1C. May interact (via SAM domain) with SERA5 (via C-terminus).

Its subcellular location is the parasitophorous vacuole. The protein localises to the host cell membrane. It localises to the host cytoplasm. It is found in the host cytoskeleton. The sequence is that of Inactive protein tyrosine kinase pTKL from Plasmodium falciparum (isolate 3D7).